Consider the following 257-residue polypeptide: Acyl-[acyl-carrier-protein]--UDP-N-acetylglucosamine O-acyltransferase (257 aa).

This sequence belongs to the transferase hexapeptide repeat family. LpxA subfamily. In terms of assembly, homotrimer.

The protein localises to the cytoplasm. It carries out the reaction a (3R)-hydroxyacyl-[ACP] + UDP-N-acetyl-alpha-D-glucosamine = a UDP-3-O-[(3R)-3-hydroxyacyl]-N-acetyl-alpha-D-glucosamine + holo-[ACP]. It participates in glycolipid biosynthesis; lipid IV(A) biosynthesis; lipid IV(A) from (3R)-3-hydroxytetradecanoyl-[acyl-carrier-protein] and UDP-N-acetyl-alpha-D-glucosamine: step 1/6. Involved in the biosynthesis of lipid A, a phosphorylated glycolipid that anchors the lipopolysaccharide to the outer membrane of the cell. The protein is Acyl-[acyl-carrier-protein]--UDP-N-acetylglucosamine O-acyltransferase of Fusobacterium nucleatum subsp. nucleatum (strain ATCC 25586 / DSM 15643 / BCRC 10681 / CIP 101130 / JCM 8532 / KCTC 2640 / LMG 13131 / VPI 4355).